Consider the following 103-residue polypeptide: Endoribonuclease MazF3 (103 aa).

Belongs to the PemK/MazF family. Forms a complex with cognate antitoxin MazE3.

Toxic component of a type II toxin-antitoxin (TA) system. Acts as an endoribonuclease, cleaving in U-rich regions. Neutralized by cognate antitoxin MazE3. This chain is Endoribonuclease MazF3 (mazF3), found in Mycobacterium tuberculosis (strain CDC 1551 / Oshkosh).